The sequence spans 469 residues: Mitochondrial distribution and morphology protein 10 (469 aa).

Belongs to the MDM10 family. As to quaternary structure, component of the ER-mitochondria encounter structure (ERMES) or MDM complex, composed of MMM1, MDM10, MDM12 and MDM34. Associates with the mitochondrial outer membrane sorting assembly machinery SAM(core) complex.

The protein resides in the mitochondrion outer membrane. In terms of biological role, component of the ERMES/MDM complex, which serves as a molecular tether to connect the endoplasmic reticulum and mitochondria. Components of this complex are involved in the control of mitochondrial shape and protein biogenesis and may function in phospholipid exchange. MDM10 is involved in the late assembly steps of the general translocase of the mitochondrial outer membrane (TOM complex). Functions in the TOM40-specific route of the assembly of outer membrane beta-barrel proteins, including the association of TOM40 with the receptor TOM22 and small TOM proteins. Can associate with the SAM(core) complex as well as the MDM12-MMM1 complex, both involved in late steps of the major beta-barrel assembly pathway, that is responsible for biogenesis of all outer membrane beta-barrel proteins. May act as a switch that shuttles between both complexes and channels precursor proteins into the TOM40-specific pathway. Plays a role in mitochondrial morphology and in the inheritance of mitochondria. In Scheffersomyces stipitis (strain ATCC 58785 / CBS 6054 / NBRC 10063 / NRRL Y-11545) (Yeast), this protein is Mitochondrial distribution and morphology protein 10.